The sequence spans 458 residues: MKTDTIAAIATGLSNAGISIVRISGDQAFAVIDKIFQTKSKAKRLSEMDSHTVHYGYIVDEEEIIDEVMVIIMRAPRSYTMEDSIEIDCHGGITVTKKVLEAVLKAGARIAEPGEFTKRAFLNGRIDLSQAEAVIDVIHANNELALKNSMKQLKGNVLHKVKDVRHSIILDTAYIEAALDDPEHISLEGFSDKLRDNVIGSIKELSELINTSENGRMIKEGIRTVILGRPNAGKSSLLNLMVGEERAIVTEIAGTTRDTIEETVFLNGLCLNLIDTAGIRETSDLVEKLGVEKSLKSAKEADLIICVIDASTPLNQDDKEILEFIKDRKAIVLLNKSDLDSVIEEEKINLLTNKPILKISAIDQTGIKDLEQTITEMFFEGNISFNDEIYITNMRHKNALVEAKVSLEQVIVSIENEMPEDFFSIDLMNAYEILGTIIGESVDEDLVNTIFKEFCMGK.

(6S)-5-formyl-5,6,7,8-tetrahydrofolate-binding residues include Arg22, Glu86, and Arg125. A TrmE-type G domain is found at 221 to 379 (GIRTVILGRP…LEQTITEMFF (159 aa)). Asn231 provides a ligand contact to K(+). Residues 231–236 (NAGKSS), 250–256 (TEIAGTT), and 275–278 (DTAG) contribute to the GTP site. Ser235 contributes to the Mg(2+) binding site. Residues Thr250, Ile252, and Thr255 each contribute to the K(+) site. Residue Thr256 participates in Mg(2+) binding. Lys458 lines the (6S)-5-formyl-5,6,7,8-tetrahydrofolate pocket.

The protein belongs to the TRAFAC class TrmE-Era-EngA-EngB-Septin-like GTPase superfamily. TrmE GTPase family. As to quaternary structure, homodimer. Heterotetramer of two MnmE and two MnmG subunits. Requires K(+) as cofactor.

The protein resides in the cytoplasm. Functionally, exhibits a very high intrinsic GTPase hydrolysis rate. Involved in the addition of a carboxymethylaminomethyl (cmnm) group at the wobble position (U34) of certain tRNAs, forming tRNA-cmnm(5)s(2)U34. In Lachnoclostridium phytofermentans (strain ATCC 700394 / DSM 18823 / ISDg) (Clostridium phytofermentans), this protein is tRNA modification GTPase MnmE.